The primary structure comprises 294 residues: 4-hydroxy-tetrahydrodipicolinate synthase (294 aa).

A pyruvate-binding site is contributed by Thr-44. The active-site Proton donor/acceptor is the Tyr-132. The active-site Schiff-base intermediate with substrate is the Lys-161. Ile-206 provides a ligand contact to pyruvate.

Belongs to the DapA family. Homotetramer; dimer of dimers.

Its subcellular location is the cytoplasm. It carries out the reaction L-aspartate 4-semialdehyde + pyruvate = (2S,4S)-4-hydroxy-2,3,4,5-tetrahydrodipicolinate + H2O + H(+). The protein operates within amino-acid biosynthesis; L-lysine biosynthesis via DAP pathway; (S)-tetrahydrodipicolinate from L-aspartate: step 3/4. In terms of biological role, catalyzes the condensation of (S)-aspartate-beta-semialdehyde [(S)-ASA] and pyruvate to 4-hydroxy-tetrahydrodipicolinate (HTPA). The protein is 4-hydroxy-tetrahydrodipicolinate synthase of Thermotoga neapolitana (strain ATCC 49049 / DSM 4359 / NBRC 107923 / NS-E).